Consider the following 360-residue polypeptide: MSNSNSGKVRVAVVYGGRSSEHSVSCVSAGAIMAHLDPEKYDVIPVGITVDGAWVVGETDPQKLTLIDRTMPEVEHHEEVRPSLDPAHRGEFHFSDGSLYATADVIFPVLHGRFGEDGTVQGLFALSDIPVVGPGVLASAAGMDKEYTKKLMAAEGLPVGREVILRDRTELTEAEKNLLGLPVFVKPARGGSSIGISRVTAWEDFNKAVGLARAHDEKVIVESEIVGSEVECGVLQYPDGRIVASVPALLSGTESGAGGFYDFDTKYLDNVVTAEIPAPLDEKTTELIQSLAVESFQALACEGLARVDFFVTANGPVLNEINTMPGFTPISMYPQMFTASGVAYEELLDVLVQQALHRDN.

Positions 149–353 (KKLMAAEGLP…YEELLDVLVQ (205 aa)) constitute an ATP-grasp domain. An ATP-binding site is contributed by 176–231 (KNLLGLPVFVKPARGGSSIGISRVTAWEDFNKAVGLARAHDEKVIVESEIVGSEVE). Asp308, Glu320, and Asn322 together coordinate Mg(2+).

This sequence belongs to the D-alanine--D-alanine ligase family. The cofactor is Mg(2+). Mn(2+) serves as cofactor.

The protein resides in the cytoplasm. It carries out the reaction 2 D-alanine + ATP = D-alanyl-D-alanine + ADP + phosphate + H(+). It participates in cell wall biogenesis; peptidoglycan biosynthesis. Cell wall formation. The polypeptide is D-alanine--D-alanine ligase (Corynebacterium glutamicum (strain ATCC 13032 / DSM 20300 / JCM 1318 / BCRC 11384 / CCUG 27702 / LMG 3730 / NBRC 12168 / NCIMB 10025 / NRRL B-2784 / 534)).